The sequence spans 330 residues: Phosphate acyltransferase (330 aa).

This sequence belongs to the PlsX family. In terms of assembly, homodimer. Probably interacts with PlsY.

The protein localises to the cytoplasm. The catalysed reaction is a fatty acyl-[ACP] + phosphate = an acyl phosphate + holo-[ACP]. It functions in the pathway lipid metabolism; phospholipid metabolism. In terms of biological role, catalyzes the reversible formation of acyl-phosphate (acyl-PO(4)) from acyl-[acyl-carrier-protein] (acyl-ACP). This enzyme utilizes acyl-ACP as fatty acyl donor, but not acyl-CoA. This Bacillus cereus (strain ATCC 14579 / DSM 31 / CCUG 7414 / JCM 2152 / NBRC 15305 / NCIMB 9373 / NCTC 2599 / NRRL B-3711) protein is Phosphate acyltransferase.